The chain runs to 212 residues: 3-isopropylmalate dehydratase small subunit (212 aa).

Belongs to the LeuD family. LeuD type 1 subfamily. Heterodimer of LeuC and LeuD.

The catalysed reaction is (2R,3S)-3-isopropylmalate = (2S)-2-isopropylmalate. It functions in the pathway amino-acid biosynthesis; L-leucine biosynthesis; L-leucine from 3-methyl-2-oxobutanoate: step 2/4. Functionally, catalyzes the isomerization between 2-isopropylmalate and 3-isopropylmalate, via the formation of 2-isopropylmaleate. This chain is 3-isopropylmalate dehydratase small subunit, found in Laribacter hongkongensis (strain HLHK9).